The primary structure comprises 286 residues: Glycine--tRNA ligase alpha subunit (286 aa).

It belongs to the class-II aminoacyl-tRNA synthetase family. In terms of assembly, tetramer of two alpha and two beta subunits.

Its subcellular location is the cytoplasm. The catalysed reaction is tRNA(Gly) + glycine + ATP = glycyl-tRNA(Gly) + AMP + diphosphate. This is Glycine--tRNA ligase alpha subunit from Thermotoga petrophila (strain ATCC BAA-488 / DSM 13995 / JCM 10881 / RKU-1).